The primary structure comprises 217 residues: Nascent polypeptide-associated complex subunit alpha (217 aa).

The interval 1–45 is disordered; that stretch reads MPELTEIKSEAAPSTSAEAKPEDVRVEDDGSDSDSDGGMPGLEEA. Basic and acidic residues predominate over residues 19–28; the sequence is AKPEDVRVED. The NAC-A/B domain maps to 70 to 135; the sequence is SRGEKKARKI…AKIEDLSQQA (66 aa). A disordered region spans residues 154-177; that stretch reads SVGATTSVAPIAEEDEEDVDDTGV. Residues 165–176 are compositionally biased toward acidic residues; it reads AEEDEEDVDDTG. Positions 177–217 constitute a UBA domain; sequence VDEKDIELVITQANTTRAKAIKALKNNNNDIVNAIMELTML.

This sequence belongs to the NAC-alpha family. As to quaternary structure, part of the nascent polypeptide-associated complex (NAC), consisting of Nac-alpha and bicaudal (bic).

In terms of biological role, may promote appropriate targeting of ribosome-nascent polypeptide complexes. Required for correct localization of the osk/oskar protein to the posterior pole during embryonic development. The osk protein directs the recruitment of molecules responsible for posterior body patterning and germline formation in the embryo. The protein is Nascent polypeptide-associated complex subunit alpha (Nacalpha) of Drosophila melanogaster (Fruit fly).